The sequence spans 277 residues: ATP-dependent Clp protease proteolytic subunit, mitochondrial (277 aa).

The transit peptide at 1-56 directs the protein to the mitochondrion; that stretch reads MWPGILVGGARVASCRYPALGPRLAAHFPAQRPPQRTLQNGLALQRCLHATATRAL. Residue Ser153 is the Nucleophile of the active site. The active site involves His178. Lys200 carries the post-translational modification N6-succinyllysine. Lys211 is modified (N6-acetyllysine). A disordered region spans residues 246-277; it reads VHPPQDGEDEPTLVQKEPVEAAPAAEPVPAST. A compositionally biased stretch (low complexity) spans 265–277; sequence EAAPAAEPVPAST.

It belongs to the peptidase S14 family. As to quaternary structure, fourteen CLPP subunits assemble into 2 heptameric rings which stack back to back to give a disk-like structure with a central cavity. Component of the ClpXP complex formed by the assembly of two CLPP heptameric rings with two CLPX hexameric rings, giving rise to a symmetrical structure with two central CLPP rings flanked by a CLPX ring at either end of the complex. In terms of tissue distribution, detected in liver (at protein level). Predominantly expressed in skeletal muscle. Intermediate levels in heart, liver and pancreas. Low in brain, placenta, lung and kidney.

The protein resides in the mitochondrion matrix. The enzyme catalyses Hydrolysis of proteins to small peptides in the presence of ATP and magnesium. alpha-casein is the usual test substrate. In the absence of ATP, only oligopeptides shorter than five residues are hydrolyzed (such as succinyl-Leu-Tyr-|-NHMec, and Leu-Tyr-Leu-|-Tyr-Trp, in which cleavage of the -Tyr-|-Leu- and -Tyr-|-Trp bonds also occurs).. Its function is as follows. Protease component of the ClpXP complex that cleaves peptides and various proteins in an ATP-dependent process. Has low peptidase activity in the absence of CLPX. The ClpXP complex can degrade CSN1S1, CSN2 and CSN3, as well as synthetic peptides (in vitro) and may be responsible for a fairly general and central housekeeping function rather than for the degradation of specific substrates. Cleaves PINK1 in the mitochondrion. In Homo sapiens (Human), this protein is ATP-dependent Clp protease proteolytic subunit, mitochondrial.